The following is a 176-amino-acid chain: Disulfide bond formation protein B (176 aa).

At M1 to A14 the chain is on the cytoplasmic side. A helical membrane pass occupies residues W15–W31. At F32 to C49 the chain is on the periplasmic side. C41 and C44 are oxidised to a cystine. Residues A50–P65 traverse the membrane as a helical segment. Topologically, residues K66–Y71 are cytoplasmic. The helical transmembrane segment at V72–Y89 threads the bilayer. Over E90–Q144 the chain is Periplasmic. C104 and C130 are disulfide-bonded. Residues W145–S163 traverse the membrane as a helical segment. Residues Q164 to R176 lie on the Cytoplasmic side of the membrane.

This sequence belongs to the DsbB family.

It is found in the cell inner membrane. Its function is as follows. Required for disulfide bond formation in some periplasmic proteins. Acts by oxidizing the DsbA protein. The chain is Disulfide bond formation protein B from Escherichia coli O1:K1 / APEC.